Here is a 145-residue protein sequence, read N- to C-terminus: MPKIKTSRVKYPEGWELIEPTLRDLEAKMREAENDPHDGKRKCEALWPIFRISHQKSRYIYDLYYRRKEISKELYEFCLDQGHADKNLIAKWKKPGYERLCCLRCIQTRDHNFATTCVCRVPKHLREEKVIECVHCGCRGCASGD.

The protein belongs to the BUD31 (G10) family.

It is found in the nucleus. This Oryza sativa subsp. japonica (Rice) protein is Protein BUD31 homolog 2.